A 305-amino-acid chain; its full sequence is Mycothiol acetyltransferase (305 aa).

N-acetyltransferase domains lie at 10 to 154 (DRLD…VVLE) and 156 to 305 (ISLR…YARA). Glu-38 is a binding site for 1D-myo-inositol 2-(L-cysteinylamino)-2-deoxy-alpha-D-glucopyranoside. Residue 82 to 84 (LAV) participates in acetyl-CoA binding. 3 residues coordinate 1D-myo-inositol 2-(L-cysteinylamino)-2-deoxy-alpha-D-glucopyranoside: Glu-183, Lys-225, and Glu-238. Acetyl-CoA-binding positions include 242–244 (VAI) and 249–255 (QGRGLGR). Tyr-276 is a binding site for 1D-myo-inositol 2-(L-cysteinylamino)-2-deoxy-alpha-D-glucopyranoside. An acetyl-CoA-binding site is contributed by 281–286 (NASALH).

It belongs to the acetyltransferase family. MshD subfamily. As to quaternary structure, monomer.

The catalysed reaction is 1D-myo-inositol 2-(L-cysteinylamino)-2-deoxy-alpha-D-glucopyranoside + acetyl-CoA = mycothiol + CoA + H(+). In terms of biological role, catalyzes the transfer of acetyl from acetyl-CoA to desacetylmycothiol (Cys-GlcN-Ins) to form mycothiol. This is Mycothiol acetyltransferase from Rhodococcus opacus (strain B4).